Consider the following 753-residue polypeptide: Polyadenylate-binding protein, cytoplasmic and nuclear (753 aa).

Over residues 1–26 (MSAEVSTTPAADNTVNGTPEATNAAA) the composition is skewed to polar residues. The tract at residues 1–52 (MSAEVSTTPAADNTVNGTPEATNAAATSAPEVTAVESASPSTTPSASQPHSA) is disordered. Residues 37 to 52 (SASPSTTPSASQPHSA) show a composition bias toward low complexity. RRM domains follow at residues 52–130 (ASLY…WSQR), 140–217 (GNVF…HHIS), 233–310 (TNVY…RAQK), and 336–460 (VNLY…LAQR). Disordered stretches follow at residues 367–417 (VMRD…TEKK) and 602–645 (MGQG…REEV). Over residues 379-417 (ESEKEKEKESNKENEKEGEEKTEEKPKESEEEPKKTEKK) the composition is skewed to basic and acidic residues. Gly residues predominate over residues 605 to 631 (GIRGPGYGQGRGGAPVQGGPRPQGGRG). The 78-residue stretch at 648-725 (TGGLTAQTLS…ALSVYDEYMK (78 aa)) folds into the PABC domain. The disordered stretch occupies residues 728-753 (GEGEAPAESAKPKEDAAETATEENKS). The segment covering 737 to 753 (AKPKEDAAETATEENKS) has biased composition (basic and acidic residues).

Belongs to the polyadenylate-binding protein type-1 family.

It is found in the cytoplasm. Its subcellular location is the nucleus. Its function is as follows. Binds the poly(A) tail of mRNA. Appears to be an important mediator of the multiple roles of the poly(A) tail in mRNA biogenesis, stability and translation. In the nucleus, involved in both mRNA cleavage and polyadenylation. Is also required for efficient mRNA export to the cytoplasm. Acts in concert with a poly(A)-specific nuclease (PAN) to affect poly(A) tail shortening, which may occur concomitantly with either nucleocytoplasmic mRNA transport or translational initiation. In the cytoplasm, stimulates translation initiation and regulates mRNA decay through translation termination-coupled poly(A) shortening, probably mediated by PAN. This is Polyadenylate-binding protein, cytoplasmic and nuclear (pab1) from Aspergillus fumigatus (strain ATCC MYA-4609 / CBS 101355 / FGSC A1100 / Af293) (Neosartorya fumigata).